A 318-amino-acid polypeptide reads, in one-letter code: Ornithine carbamoyltransferase (318 aa).

Carbamoyl phosphate contacts are provided by residues 63-66, Gln-90, Arg-114, and 141-144; these read STRT and HPCQ. Residues Asn-172, Asp-235, and 239-240 contribute to the L-ornithine site; that span reads SM. Residues 275–276 and Arg-303 each bind carbamoyl phosphate; that span reads CL.

This sequence belongs to the aspartate/ornithine carbamoyltransferase superfamily. OTCase family.

Its subcellular location is the cytoplasm. The enzyme catalyses carbamoyl phosphate + L-ornithine = L-citrulline + phosphate + H(+). Its pathway is amino-acid biosynthesis; L-arginine biosynthesis; L-arginine from L-ornithine and carbamoyl phosphate: step 1/3. Its function is as follows. Reversibly catalyzes the transfer of the carbamoyl group from carbamoyl phosphate (CP) to the N(epsilon) atom of ornithine (ORN) to produce L-citrulline. In Prochlorococcus marinus (strain SARG / CCMP1375 / SS120), this protein is Ornithine carbamoyltransferase.